Here is an 84-residue protein sequence, read N- to C-terminus: Large ribosomal subunit protein uL23 (84 aa).

This sequence belongs to the universal ribosomal protein uL23 family. In terms of assembly, part of the 50S ribosomal subunit. Contacts protein L29.

Binds to 23S rRNA. One of the proteins that surrounds the polypeptide exit tunnel on the outside of the ribosome. The sequence is that of Large ribosomal subunit protein uL23 from Halobacterium salinarum (strain ATCC 700922 / JCM 11081 / NRC-1) (Halobacterium halobium).